A 692-amino-acid chain; its full sequence is Elongation factor G (692 aa).

Residues 8-282 (AKTRNIGIMA…AVIAYLPSPL (275 aa)) form the tr-type G domain. GTP contacts are provided by residues 17–24 (AHVDAGKT), 81–85 (DTPGH), and 135–138 (NKMD).

It belongs to the TRAFAC class translation factor GTPase superfamily. Classic translation factor GTPase family. EF-G/EF-2 subfamily.

The protein localises to the cytoplasm. Its function is as follows. Catalyzes the GTP-dependent ribosomal translocation step during translation elongation. During this step, the ribosome changes from the pre-translocational (PRE) to the post-translocational (POST) state as the newly formed A-site-bound peptidyl-tRNA and P-site-bound deacylated tRNA move to the P and E sites, respectively. Catalyzes the coordinated movement of the two tRNA molecules, the mRNA and conformational changes in the ribosome. This Streptococcus equi subsp. zooepidemicus (strain MGCS10565) protein is Elongation factor G.